A 266-amino-acid polypeptide reads, in one-letter code: uncharacterized protein (266 aa).

Belongs to the chlamydial CPn_0087/CT_309/TC_0583 family.

This is an uncharacterized protein from Chlamydia trachomatis serovar D (strain ATCC VR-885 / DSM 19411 / UW-3/Cx).